A 530-amino-acid polypeptide reads, in one-letter code: NADH-quinone oxidoreductase subunit C/D (530 aa).

The NADH dehydrogenase I subunit C stretch occupies residues 1-144 (MQEIQFIVPA…NPLCMANEET (144 aa)). An NADH dehydrogenase I subunit D region spans residues 171–530 (EYVVNIGPQH…LDYVVPDIDR (360 aa)).

This sequence in the N-terminal section; belongs to the complex I 30 kDa subunit family. It in the C-terminal section; belongs to the complex I 49 kDa subunit family. As to quaternary structure, NDH-1 is composed of 13 different subunits. Subunits NuoB, CD, E, F, and G constitute the peripheral sector of the complex.

It is found in the cell inner membrane. The catalysed reaction is a quinone + NADH + 5 H(+)(in) = a quinol + NAD(+) + 4 H(+)(out). Its function is as follows. NDH-1 shuttles electrons from NADH, via FMN and iron-sulfur (Fe-S) centers, to quinones in the respiratory chain. The immediate electron acceptor for the enzyme in this species is believed to be a menaquinone. Couples the redox reaction to proton translocation (for every two electrons transferred, four hydrogen ions are translocated across the cytoplasmic membrane), and thus conserves the redox energy in a proton gradient. This is NADH-quinone oxidoreductase subunit C/D from Bacteroides thetaiotaomicron (strain ATCC 29148 / DSM 2079 / JCM 5827 / CCUG 10774 / NCTC 10582 / VPI-5482 / E50).